The following is a 284-amino-acid chain: MPAAISRNWPAPAKLNLFLHINGRRADGYHELQTLFQFIDYCDMLDFKVTETPELILHSNMSGVVADSDNLILRAAKSLQQTTGFNGGAEIWLDKRLPMGGGLGGGSSDAATTLVALNTLWHTQLSTEELAKIGLKLGADIPVFIHGFAAFAEGVGERLQAVNPSEPWYLVIAPDAHVSTADVFQDPLLPRDTPKLAIDTLMSQPWANDCQKLVVSKYPQVAKALGWLLEYAPSRMTGTGACVFGEFTQQQQALAALAKLPSEMQGFVAQGMNLSPLITRLSHP.

Residue Lys14 is part of the active site. ATP is bound at residue 98–108 (PMGGGLGGGSS). The active site involves Asp140.

The protein belongs to the GHMP kinase family. IspE subfamily.

It carries out the reaction 4-CDP-2-C-methyl-D-erythritol + ATP = 4-CDP-2-C-methyl-D-erythritol 2-phosphate + ADP + H(+). The protein operates within isoprenoid biosynthesis; isopentenyl diphosphate biosynthesis via DXP pathway; isopentenyl diphosphate from 1-deoxy-D-xylulose 5-phosphate: step 3/6. Functionally, catalyzes the phosphorylation of the position 2 hydroxy group of 4-diphosphocytidyl-2C-methyl-D-erythritol. This is 4-diphosphocytidyl-2-C-methyl-D-erythritol kinase from Shewanella baltica (strain OS195).